Consider the following 1022-residue polypeptide: Antigenic heat-stable 120 kDa protein (1022 aa).

Residues 1–33 (MSKNGNQDISEFDPLNREFTEAEKQQQMQQEQE) are disordered. Residues 14 to 24 (PLNREFTEAEK) show a composition bias toward basic and acidic residues.

The protein localises to the cytoplasm. This chain is Antigenic heat-stable 120 kDa protein (sca4), found in Rickettsia prowazekii (strain Madrid E).